The chain runs to 170 residues: Cathelicidin antimicrobial peptide (170 aa).

The N-terminal stretch at 1-30 (MKTQRDSPSLGRWSLVLLLLGLVMPLAIVA) is a signal peptide. Residues 31–131 (QVLSYQEAVL…DISCDKDNRR (101 aa)) constitute a propeptide, cathelin-like domain (CLD). Disulfide bonds link C86–C97 and C108–C125. Residues 150-162 (LKKVGQKIKDFLG) are active core.

The protein belongs to the cathelicidin family. As to quaternary structure, monomer, homodimer or homotrimer (in vitro). Oligomerizes as tetra- or hexamer in solution (in vitro). Post-translationally, proteolytically cleaved by proteinase PRTN3 into antibacterial peptide LL-37. Proteolytically cleaved by cathepsin CTSG and neutrophil elastase ELANE. In terms of processing, resistant to proteolytic degradation in solution, and when bound to both zwitterionic (mimicking mammalian membranes) and negatively charged membranes (mimicking bacterial membranes). After secretion onto the skin surface, the CAMP gene product is processed by a serine protease-dependent mechanism into multiple novel antimicrobial peptides distinct from and shorter than cathelicidin LL-37. These peptides show enhanced antimicrobial action, acquiring the ability to kill skin pathogens such as S.aureus, E.coli and C.albicans. These peptides have lost the ability to stimulate CXCL8/IL8 release from keratinocytes. The peptides act synergistically, killing bacteria at lower concentrations when present together, and maintain activity at increased salt condition.

It is found in the secreted. The protein localises to the vesicle. Functionally, antimicrobial protein that is an integral component of the innate immune system. Binds to bacterial lipopolysaccharides (LPS). Acts via neutrophil N-formyl peptide receptors to enhance the release of CXCL2. Postsecretory processing generates multiple cathelicidin antimicrobial peptides with various lengths which act as a topical antimicrobial defense in sweat on skin. The unprocessed precursor form, cathelicidin antimicrobial peptide, inhibits the growth of Gram-negative E.coli and E.aerogenes with efficiencies comparable to that of the mature peptide LL-37 (in vitro). Antimicrobial peptide that is an integral component of the innate immune system. Binds to bacterial lipopolysaccharides (LPS). Causes membrane permeabilization by forming transmembrane pores (in vitro). Causes lysis of E.coli. Exhibits antimicrobial activity against Gram-negative bacteria such as P.aeruginosa, S.typhimurium, E.aerogenes, E.coli and P.syringae, Gram-positive bacteria such as L.monocytogenes, S.epidermidis, S.pyogenes and S.aureus, as well as vancomycin-resistant enterococci (in vitro). Exhibits antimicrobial activity against methicillin-resistant S.aureus, P.mirabilis, and C.albicans in low-salt media, but not in media containing 100 mM NaCl (in vitro). Forms chiral supramolecular assemblies with quinolone signal (PQS) molecules of P.aeruginosa, which may lead to interference of bacterial quorum signaling and perturbance of bacterial biofilm formation. May form supramolecular fiber-like assemblies on bacterial membranes. Induces cytokine and chemokine producation as well as TNF/TNFA and CSF2/GMCSF production in normal human keratinocytes. Exhibits hemolytic activity against red blood cells. Its function is as follows. Exhibits antimicrobial activity against E.coli and B.megaterium (in vitro). The sequence is that of Cathelicidin antimicrobial peptide from Macaca fascicularis (Crab-eating macaque).